The chain runs to 375 residues: tRNA-specific 2-thiouridylase MnmA (375 aa).

Residues 17 to 24 and methionine 43 each bind ATP; that span reads GMSGGVDS. Residues 103–105 are interaction with target base in tRNA; the sequence is NPD. Residue cysteine 108 is the Nucleophile of the active site. Cysteine 108 and cysteine 204 form a disulfide bridge. An ATP-binding site is contributed by glycine 132. The tract at residues 154 to 156 is interaction with tRNA; the sequence is KDQ. The active-site Cysteine persulfide intermediate is cysteine 204. Residues 316–317 are interaction with tRNA; that stretch reads RY.

The protein belongs to the MnmA/TRMU family.

It localises to the cytoplasm. It carries out the reaction S-sulfanyl-L-cysteinyl-[protein] + uridine(34) in tRNA + AH2 + ATP = 2-thiouridine(34) in tRNA + L-cysteinyl-[protein] + A + AMP + diphosphate + H(+). Functionally, catalyzes the 2-thiolation of uridine at the wobble position (U34) of tRNA, leading to the formation of s(2)U34. The sequence is that of tRNA-specific 2-thiouridylase MnmA from Stutzerimonas stutzeri (strain A1501) (Pseudomonas stutzeri).